The primary structure comprises 78 residues: Large ribosomal subunit protein bL28 (78 aa).

Residues 1–21 (MSRVCQLSGKRANNGMAVSHS) are disordered.

This sequence belongs to the bacterial ribosomal protein bL28 family.

The polypeptide is Large ribosomal subunit protein bL28 (Synechococcus sp. (strain RCC307)).